The following is a 580-amino-acid chain: Formate--tetrahydrofolate ligase (580 aa).

83-90 is an ATP binding site; that stretch reads TPMGEGKT.

It belongs to the formate--tetrahydrofolate ligase family.

It carries out the reaction (6S)-5,6,7,8-tetrahydrofolate + formate + ATP = (6R)-10-formyltetrahydrofolate + ADP + phosphate. The protein operates within one-carbon metabolism; tetrahydrofolate interconversion. The chain is Formate--tetrahydrofolate ligase from Haloquadratum walsbyi (strain DSM 16790 / HBSQ001).